Consider the following 492-residue polypeptide: N-succinylglutamate 5-semialdehyde dehydrogenase (492 aa).

Residue 220–225 (GSANTG) coordinates NAD(+). Catalysis depends on residues Glu243 and Cys277.

It belongs to the aldehyde dehydrogenase family. AstD subfamily.

It carries out the reaction N-succinyl-L-glutamate 5-semialdehyde + NAD(+) + H2O = N-succinyl-L-glutamate + NADH + 2 H(+). It functions in the pathway amino-acid degradation; L-arginine degradation via AST pathway; L-glutamate and succinate from L-arginine: step 4/5. Functionally, catalyzes the NAD-dependent reduction of succinylglutamate semialdehyde into succinylglutamate. The polypeptide is N-succinylglutamate 5-semialdehyde dehydrogenase (Escherichia coli O6:K15:H31 (strain 536 / UPEC)).